Consider the following 112-residue polypeptide: FK506-binding protein 1A (112 aa).

Residues 20–108 (GDFVTIHYTG…IFEVELLGIN (89 aa)) form the PPIase FKBP-type domain.

This sequence belongs to the FKBP-type PPIase family. FKBP1 subfamily.

It is found in the cytoplasm. It carries out the reaction [protein]-peptidylproline (omega=180) = [protein]-peptidylproline (omega=0). With respect to regulation, inhibited by both FK506 and rapamycin. Its function is as follows. PPIases accelerate the folding of proteins. It catalyzes the cis-trans isomerization of proline imidic peptide bonds in oligopeptides. The polypeptide is FK506-binding protein 1A (fpr1A) (Aspergillus fumigatus (strain ATCC MYA-4609 / CBS 101355 / FGSC A1100 / Af293) (Neosartorya fumigata)).